The chain runs to 1006 residues: Transcription factor tau subunit sfc4 (1006 aa).

Residues glycine 64 to aspartate 91 form a disordered region. The span at tryptophan 66–serine 80 shows a compositional bias: acidic residues. TPR repeat units follow at residues glutamine 133 to valine 166, histidine 205 to asparagine 238, alanine 277 to tyrosine 310, histidine 396 to tyrosine 429, tryptophan 431 to glutamine 464, and isoleucine 466 to asparagine 499. A coiled-coil region spans residues leucine 506–leucine 554. TPR repeat units lie at residues proline 841 to cysteine 874 and glutamine 924 to serine 957.

Component of the TFIIIC complex including sfc1, sfc3, sfc4, sfc6 and sfc7. The subunits are organized in two globular domains, tauA and tauB, connected by a proteolysis-sensitive and flexible linker. Interacts with sfc1, sfc3 and sfc6. In terms of processing, phosphorylated.

Its subcellular location is the nucleus. TFIIIC mediates tRNA and 5S RNA gene activation by binding to intragenic promoter elements. Upstream of the transcription start site, TFIIIC assembles the initiation complex TFIIIB-TFIIIC-tDNA, which is sufficient for RNA polymerase III recruitment and function. Part of the tauA domain of TFIIIC that binds boxA DNA promoter sites of tRNA and similar genes. Sfc4 is the TFIIIB assembling subunit of TFIIIC. The protein is Transcription factor tau subunit sfc4 of Schizosaccharomyces pombe (strain 972 / ATCC 24843) (Fission yeast).